Reading from the N-terminus, the 391-residue chain is GATA-binding factor 6-B (391 aa).

Residues 57–69 (GTHSVNSHWSQAT) are compositionally biased toward polar residues. Positions 57–107 (GTHSVNSHWSQATSESSSYSSSSPHPSSRYHYSPSPPMANGSTRDTGYSSS) are disordered. Residues 70–89 (SESSSYSSSSPHPSSRYHYS) show a composition bias toward low complexity. Over residues 96 to 107 (NGSTRDTGYSSS) the composition is skewed to polar residues. 2 GATA-type zinc fingers span residues 182 to 206 (CVNC…CNAC) and 236 to 260 (CANC…CNAC). The segment at 277–334 (KEGIQTRKRKPKNLNKSKSSSSNGNSSHHITMTPTSTTSSTNSDDCIKNGSPSQNTAP) is disordered. Basic residues predominate over residues 282–291 (TRKRKPKNLN). The span at 292–319 (KSKSSSSNGNSSHHITMTPTSTTSSTNS) shows a compositional bias: low complexity.

In embryos, expressed in the presumptive heart mesoderm. In adults, widely distributed but predominant in the heart.

Its subcellular location is the nucleus. In terms of biological role, transcriptional activator that binds 5'-GATA-3'-containing motifs within gene promoters. Regulates cardiac-specific transcription during embryogenesis and thereby cardiogenesis. In Xenopus laevis (African clawed frog), this protein is GATA-binding factor 6-B (gata6-b).